The primary structure comprises 196 residues: Lipoprotein signal peptidase (196 aa).

3 helical membrane passes run 43-63 (LMLK…GISF), 75-95 (AIFL…MICS), and 97-117 (TIGS…NLID). Residues Asp-126 and Asp-144 contribute to the active site. The helical transmembrane segment at 135 to 155 (YSFPVFNLADCFITLGVIILI) threads the bilayer.

It belongs to the peptidase A8 family.

It is found in the cell inner membrane. The enzyme catalyses Release of signal peptides from bacterial membrane prolipoproteins. Hydrolyzes -Xaa-Yaa-Zaa-|-(S,diacylglyceryl)Cys-, in which Xaa is hydrophobic (preferably Leu), and Yaa (Ala or Ser) and Zaa (Gly or Ala) have small, neutral side chains.. It participates in protein modification; lipoprotein biosynthesis (signal peptide cleavage). In terms of biological role, this protein specifically catalyzes the removal of signal peptides from prolipoproteins. The protein is Lipoprotein signal peptidase of Rickettsia typhi (strain ATCC VR-144 / Wilmington).